We begin with the raw amino-acid sequence, 654 residues long: MFSQNMIIRDGEYTKTIYTMIKEERFQDAINTLNTIPESSTTRAGLSLLGHCYYQTQDFIEAANCYEHLLNLVPDVQEYRLYYAQSLFQAGLFEEAQKIIATGLDSPELKEKVLQLQSAIAYGNEDYTAAQSLLLQRQDGNGQEASTKNDEGCLLYQANMYEDALQRYVSALQAGGFNPHVAYNAALCHYRRKENSQALNYIAEIVERGIRNHPELGVGAQAETEGGARSVGNPPALAASGLAQAFNLKAAIEYQEGNADGAREALTDLPPRSEPELDPVTLHNMALTDPTGGGAGLRRLAFLLELGPPACPPETFANLLLLCCKHEMYDTAADILAEHTHLTYKYLSPYLYDLLDALITAQSTPEEAEQKLGTLASSIGGRLRALAAKVQECRSATDQNALRMALREYEGALESYLPVAMARAWIPWRMDDFQGAEREFRASAEFCSETPSWRLHAAHVLFMRGDRYKEAAAFYEPIVRQNYDDILSIPASVLANLCVAYIMTSQNEEAEELMRKVERAEERKGNATGQCLHLCIVNLVIGTLYCAKNNYEFGLSRIAHALDGGSGARLCADTWIHVKRCVLGLLTGMAKQTIVLPSIALQETLNFLRACEAYGLTIPSVLTGPLEDSGEQPPTIGLEARKLRALLLRLMEYK.

TPR repeat units follow at residues 10-43, 44-76, 145-178, 180-212, 393-426, 452-485, and 535-568; these read DGEYTKTIYTMIKEERFQDAINTLNTIPESSTTR, AGLSLLGHCYYQTQDFIEAANCYEHLLNLVPDV, ASTKNDEGCLLYQANMYEDALQRYVSALQAGGFN, HVAYNAALCHYRRKENSQALNYIAEIVERGIRN, CRSATDQNALRMALREYEGALESYLPVAMARAWI, SWRLHAAHVLFMRGDRYKEAAAFYEPIVRQNYDD, and CIVNLVIGTLYCAKNNYEFGLSRIAHALDGGSGA.

The protein belongs to the TTC30/dfy-1/fleer family.

The protein resides in the cell projection. The protein localises to the cilium. Functionally, required for polyglutamylation of axonemal tubulin in sensory cilia. Plays a role in anterograde intraflagellar transport (IFT), the process by which cilia precursors are transported from the base of the cilium to the site of their incorporation at the tip. The protein is Tetratricopeptide repeat protein 30 homolog of Anopheles gambiae (African malaria mosquito).